Here is a 401-residue protein sequence, read N- to C-terminus: Adenylosuccinate synthetase (401 aa).

GTP is bound by residues 11-17 and 39-41; these read GDEGKGK and GHT. The active-site Proton acceptor is aspartate 12. Mg(2+) contacts are provided by aspartate 12 and glycine 39. IMP contacts are provided by residues 12 to 15, 37 to 40, threonine 127, arginine 141, glutamine 212, threonine 227, and arginine 290; these read DEGK and NAGH. The Proton donor role is filled by histidine 40. Position 286 to 292 (286 to 292) interacts with substrate; sequence ATTGRPR. Residues arginine 292, 318–320, and 390–392 each bind GTP; these read KGD and SVG.

Belongs to the adenylosuccinate synthetase family. As to quaternary structure, homodimer. The cofactor is Mg(2+).

It is found in the cytoplasm. The catalysed reaction is IMP + L-aspartate + GTP = N(6)-(1,2-dicarboxyethyl)-AMP + GDP + phosphate + 2 H(+). The protein operates within purine metabolism; AMP biosynthesis via de novo pathway; AMP from IMP: step 1/2. In terms of biological role, plays an important role in the de novo pathway of purine nucleotide biosynthesis. Catalyzes the first committed step in the biosynthesis of AMP from IMP. The polypeptide is Adenylosuccinate synthetase (Thermosipho africanus (strain TCF52B)).